The chain runs to 86 residues: RNA-binding protein Hfq (86 aa).

A Sm domain is found at 12–73 (DIFLNQVRKE…ISTITPQKPV (62 aa)).

Belongs to the Hfq family. Homohexamer.

RNA chaperone that binds small regulatory RNA (sRNAs) and mRNAs to facilitate mRNA translational regulation in response to envelope stress, environmental stress and changes in metabolite concentrations. Also binds with high specificity to tRNAs. The polypeptide is RNA-binding protein Hfq (Thermoanaerobacter pseudethanolicus (strain ATCC 33223 / 39E) (Clostridium thermohydrosulfuricum)).